A 362-amino-acid chain; its full sequence is Diphosphomevalonate decarboxylase (362 aa).

(R)-5-diphosphomevalonate contacts are provided by residues 17–20, Arg72, 150–155, and Thr206; these read YWGK and SGSACR.

It belongs to the diphosphomevalonate decarboxylase family. As to quaternary structure, homodimer.

It catalyses the reaction (R)-5-diphosphomevalonate + ATP = isopentenyl diphosphate + ADP + phosphate + CO2. Its pathway is isoprenoid biosynthesis; isopentenyl diphosphate biosynthesis via mevalonate pathway; isopentenyl diphosphate from (R)-mevalonate: step 3/3. In terms of biological role, diphosphomevalonate decarboxylase; part of the second module of ergosterol biosynthesis pathway that includes the middle steps of the pathway. MVD1 converts diphosphomevalonate into isopentenyl diphosphate. The second module is carried out in the vacuole and involves the formation of farnesyl diphosphate, which is also an important intermediate in the biosynthesis of ubiquinone, dolichol, heme and prenylated proteins. Activity by the mevalonate kinase ERG12 first converts mevalonate into 5-phosphomevalonate. 5-phosphomevalonate is then further converted to 5-diphosphomevalonate by the phosphomevalonate kinase ERG8. The diphosphomevalonate decarboxylase MVD then produces isopentenyl diphosphate. The isopentenyl-diphosphate delta-isomerase IDI1 then catalyzes the 1,3-allylic rearrangement of the homoallylic substrate isopentenyl (IPP) to its highly electrophilic allylic isomer, dimethylallyl diphosphate (DMAPP). Finally the farnesyl diphosphate synthase ERG20 catalyzes the sequential condensation of isopentenyl pyrophosphate with dimethylallyl pyrophosphate, and then with the resultant geranylpyrophosphate to the ultimate product farnesyl pyrophosphate. The polypeptide is Diphosphomevalonate decarboxylase (Candida albicans (strain SC5314 / ATCC MYA-2876) (Yeast)).